The primary structure comprises 508 residues: Cytochrome P450 monooxygenase aflV (508 aa).

A helical transmembrane segment spans residues 18–38 (LTWWFLAVGGAWIVSKIIKIL). Asn-192, Asn-209, Asn-302, and Asn-408 each carry an N-linked (GlcNAc...) asparagine glycan. Residue Cys-453 participates in heme binding.

The protein belongs to the cytochrome P450 family. Requires heme as cofactor.

It localises to the membrane. Its pathway is mycotoxin biosynthesis; aflatoxin biosynthesis. In terms of biological role, cytochrome P450 monooxygenase; part of the gene cluster that mediates the biosynthesis of aflatoxins, a group of polyketide-derived furanocoumarins, and part of the most toxic and carcinogenic compounds among the known mycotoxins. The four major aflatoxins produced by A.parasiticus are aflatoxin B1 (AFB1), aflatoxin B2 (AFB2), aflatoxin G1 (AFG1) and aflatoxin G2 (AFG2). The role of the cytochrome P450 monooxygenase aflV in aflatoxin biosynthesis has still to be characterized. The biosynthesis of aflatoxins begins with the norsolorinic acid synthase aflC that combines a hexanoyl starter unit produced by the fatty acid synthase aflA/aflB and 7 malonyl-CoA extender units to synthesize the precursor NOR. The second step is the conversion of NOR to averantin and requires the norsolorinic acid ketoreductase aflD, which catalyzes the dehydration of norsolorinic acid to form (1'S)-averantin. The norsolorinic acid reductases aflE and aflF may also play a role in the conversion of NOR to AVN. The cytochrome P450 monooxygenase aflG then catalyzes the hydroxylation of AVN to 5'hydroxyaverantin (HAVN). The next step is performed by the 5'-hydroxyaverantin dehydrogenase aflH that transforms HAVN to 5'-oxoaverantin (OAVN) which is further converted to averufin (AVF) by aflK that plays a dual role in the pathway, as a 5'-oxoaverantin cyclase that mediates conversion of 5'-oxoaverantin, as well as a versicolorin B synthase in a later step in the pathway. The averufin oxidase aflI catalyzes the conversion of AVF to versiconal hemiacetal acetate (VHA). VHA is then the substrate for the versiconal hemiacetal acetate esterase aflJ to yield versiconal (VAL). Versicolorin B synthase aflK then converts VAL to versicolorin B (VERB) by closing the bisfuran ring of aflatoxin which is required for DNA-binding, thus giving to aflatoxin its activity as a mutagen. Then, the activity of the versicolorin B desaturase aflL leads to versicolorin A (VERA). A branch point starts from VERB since it can also be converted to dihydrodemethylsterigmatocystin (DMDHST), probably also by aflL, VERA being a precursor for aflatoxins B1 and G1, and DMDHST for aflatoxins B2 and G2. Next, the versicolorin reductase aflM and the cytochrome P450 monooxygenase aflN are involved in conversion of VERA to demethylsterigmatocystin (DMST). AflX and aflY seem also involved in this step, through probable aflX-mediated epoxide ring-opening step following versicolorin A oxidation and aflY-mediated Baeyer-Villiger oxidation required for the formation of the xanthone ring. The methyltransferase aflO then leads to the modification of DMST to sterigmatocystin (ST), and of DMDHST to dihydrosterigmatocystin (DHST). Both ST and DHST are then substrates of the O-methyltransferase aflP to yield O-methylsterigmatocystin (OMST) and dihydro-O-methylsterigmatocystin (DHOMST), respectively. Finally OMST is converted to aflatoxins B1 and G1, and DHOMST to aflatoxins B2 and G2, via the action of several enzymes including O-methylsterigmatocystin oxidoreductase aflQ, the cytochrome P450 monooxygenase aflU, but also the NADH-dependent flavin oxidoreductase nadA which is specifically required for the synthesis of AFG1. The polypeptide is Cytochrome P450 monooxygenase aflV (Aspergillus parasiticus (strain ATCC 56775 / NRRL 5862 / SRRC 143 / SU-1)).